A 565-amino-acid chain; its full sequence is Sensor histidine kinase MtrB (565 aa).

Positions 1-13 (MMWGSRRRTRSRW) are enriched in basic residues. Residues 1 to 21 (MMWGSRRRTRSRWGRSGPMTR) form a disordered region. 2 consecutive transmembrane segments (helical) span residues 42-62 (VVAL…FVLT) and 213-233 (GTMI…ALLV). Positions 235-287 (RQVVVPVRSASRIAERFAEGHLSERMPVRGEDDMARLAMSFNDMAESLSRQIT) constitute an HAMP domain. In terms of domain architecture, Histidine kinase spans 302–519 (DVSHELRTPL…CFRLTLPLVR (218 aa)). Position 305 is a phosphohistidine; by autocatalysis (H305). Residues 524–565 (TTSPLPMKPIPQPSPSGGQSPSTGPQHAKDRARQREHAERSL) form a disordered region. Low complexity predominate over residues 538-549 (PSGGQSPSTGPQ). The span at 550–565 (HAKDRARQREHAERSL) shows a compositional bias: basic and acidic residues.

Its subcellular location is the cell membrane. The catalysed reaction is ATP + protein L-histidine = ADP + protein N-phospho-L-histidine.. In terms of biological role, member of the two-component regulatory system MtrA/MtrB. Seems to function as a membrane-associated protein kinase that phosphorylates MtrA in response to environmental signals. This chain is Sensor histidine kinase MtrB (mtrB), found in Mycolicibacterium paratuberculosis (strain ATCC BAA-968 / K-10) (Mycobacterium paratuberculosis).